The primary structure comprises 170 residues: Adenine phosphoribosyltransferase (170 aa).

It belongs to the purine/pyrimidine phosphoribosyltransferase family. As to quaternary structure, homodimer.

It is found in the cytoplasm. The enzyme catalyses AMP + diphosphate = 5-phospho-alpha-D-ribose 1-diphosphate + adenine. It functions in the pathway purine metabolism; AMP biosynthesis via salvage pathway; AMP from adenine: step 1/1. Catalyzes a salvage reaction resulting in the formation of AMP, that is energically less costly than de novo synthesis. In Flavobacterium johnsoniae (strain ATCC 17061 / DSM 2064 / JCM 8514 / BCRC 14874 / CCUG 350202 / NBRC 14942 / NCIMB 11054 / UW101) (Cytophaga johnsonae), this protein is Adenine phosphoribosyltransferase.